Reading from the N-terminus, the 271-residue chain is 4-hydroxy-tetrahydrodipicolinate reductase (271 aa).

NAD(+) is bound by residues 10–15 (GAGGRM), E36, 100–102 (GTT), and 124–127 (SGNM). H157 acts as the Proton donor/acceptor in catalysis. H158 contacts (S)-2,3,4,5-tetrahydrodipicolinate. K161 functions as the Proton donor in the catalytic mechanism. 167–168 (GT) is a binding site for (S)-2,3,4,5-tetrahydrodipicolinate.

It belongs to the DapB family.

The protein resides in the cytoplasm. It carries out the reaction (S)-2,3,4,5-tetrahydrodipicolinate + NAD(+) + H2O = (2S,4S)-4-hydroxy-2,3,4,5-tetrahydrodipicolinate + NADH + H(+). The enzyme catalyses (S)-2,3,4,5-tetrahydrodipicolinate + NADP(+) + H2O = (2S,4S)-4-hydroxy-2,3,4,5-tetrahydrodipicolinate + NADPH + H(+). Its pathway is amino-acid biosynthesis; L-lysine biosynthesis via DAP pathway; (S)-tetrahydrodipicolinate from L-aspartate: step 4/4. Catalyzes the conversion of 4-hydroxy-tetrahydrodipicolinate (HTPA) to tetrahydrodipicolinate. This is 4-hydroxy-tetrahydrodipicolinate reductase from Rhodopseudomonas palustris (strain ATCC BAA-98 / CGA009).